A 239-amino-acid polypeptide reads, in one-letter code: Leucyl/phenylalanyl-tRNA--protein transferase (239 aa).

Belongs to the L/F-transferase family.

It localises to the cytoplasm. The catalysed reaction is N-terminal L-lysyl-[protein] + L-leucyl-tRNA(Leu) = N-terminal L-leucyl-L-lysyl-[protein] + tRNA(Leu) + H(+). It carries out the reaction N-terminal L-arginyl-[protein] + L-leucyl-tRNA(Leu) = N-terminal L-leucyl-L-arginyl-[protein] + tRNA(Leu) + H(+). The enzyme catalyses L-phenylalanyl-tRNA(Phe) + an N-terminal L-alpha-aminoacyl-[protein] = an N-terminal L-phenylalanyl-L-alpha-aminoacyl-[protein] + tRNA(Phe). Functionally, functions in the N-end rule pathway of protein degradation where it conjugates Leu, Phe and, less efficiently, Met from aminoacyl-tRNAs to the N-termini of proteins containing an N-terminal arginine or lysine. The chain is Leucyl/phenylalanyl-tRNA--protein transferase from Aliivibrio fischeri (strain MJ11) (Vibrio fischeri).